The following is a 285-amino-acid chain: Meiotically up-regulated gene 125 protein (285 aa).

It is found in the cytoplasm. The protein localises to the nucleus. Has a role in meiosis. This is Meiotically up-regulated gene 125 protein (mug125) from Schizosaccharomyces pombe (strain 972 / ATCC 24843) (Fission yeast).